A 223-amino-acid chain; its full sequence is GTP-binding nuclear protein Ran (223 aa).

A Small GTPase Ran-type domain is found at 8–172; the sequence is VVAEFKLVLV…LWILRKLTGD (165 aa). 19 to 26 serves as a coordination point for GTP; it reads DGGVGKTT. Residues 38-46 are switch-I; it reads KRYIATQGV. GTP is bound by residues Gly-69, 123-126, and 151-153; these read NKVD and SAK. Residues 69–85 form a switch-II region; sequence GQEKLGGLREGYYIGAD.

This sequence belongs to the small GTPase superfamily. Ran family. Monomer. Found in a nuclear export complex with RanGTP, exportin and pre-miRNA.

The protein localises to the nucleus. In terms of biological role, GTP-binding protein involved in nucleocytoplasmic transport. Required for the import of protein into the nucleus and also for RNA export. Involved in chromatin condensation and control of cell cycle. The chain is GTP-binding nuclear protein Ran from Tetrahymena pyriformis.